We begin with the raw amino-acid sequence, 417 residues long: NADH-quinone oxidoreductase subunit D (417 aa).

It belongs to the complex I 49 kDa subunit family. In terms of assembly, NDH-1 is composed of 14 different subunits. Subunits NuoB, C, D, E, F, and G constitute the peripheral sector of the complex.

The protein localises to the cell inner membrane. It carries out the reaction a quinone + NADH + 5 H(+)(in) = a quinol + NAD(+) + 4 H(+)(out). In terms of biological role, NDH-1 shuttles electrons from NADH, via FMN and iron-sulfur (Fe-S) centers, to quinones in the respiratory chain. The immediate electron acceptor for the enzyme in this species is believed to be ubiquinone. Couples the redox reaction to proton translocation (for every two electrons transferred, four hydrogen ions are translocated across the cytoplasmic membrane), and thus conserves the redox energy in a proton gradient. The polypeptide is NADH-quinone oxidoreductase subunit D (Coxiella burnetii (strain RSA 331 / Henzerling II)).